The following is a 478-amino-acid chain: Serine hydroxymethyltransferase (478 aa).

Residues Leu-161 and 165-167 (GHL) contribute to the (6S)-5,6,7,8-tetrahydrofolate site. Lys-273 bears the N6-(pyridoxal phosphate)lysine mark. Glu-291 contacts (6S)-5,6,7,8-tetrahydrofolate.

The protein belongs to the SHMT family. In terms of assembly, homodimer. Pyridoxal 5'-phosphate is required as a cofactor.

Its subcellular location is the cytoplasm. The catalysed reaction is (6R)-5,10-methylene-5,6,7,8-tetrahydrofolate + glycine + H2O = (6S)-5,6,7,8-tetrahydrofolate + L-serine. It functions in the pathway one-carbon metabolism; tetrahydrofolate interconversion. Its pathway is amino-acid biosynthesis; glycine biosynthesis; glycine from L-serine: step 1/1. Catalyzes the reversible interconversion of serine and glycine with tetrahydrofolate (THF) serving as the one-carbon carrier. This reaction serves as the major source of one-carbon groups required for the biosynthesis of purines, thymidylate, methionine, and other important biomolecules. Also exhibits THF-independent aldolase activity toward beta-hydroxyamino acids, producing glycine and aldehydes, via a retro-aldol mechanism. The chain is Serine hydroxymethyltransferase from Salinispora tropica (strain ATCC BAA-916 / DSM 44818 / JCM 13857 / NBRC 105044 / CNB-440).